The primary structure comprises 302 residues: Sulfate adenylyltransferase subunit 2 (302 aa).

Belongs to the PAPS reductase family. CysD subfamily. Heterodimer composed of CysD, the smaller subunit, and CysN.

It carries out the reaction sulfate + ATP + H(+) = adenosine 5'-phosphosulfate + diphosphate. It functions in the pathway sulfur metabolism; hydrogen sulfide biosynthesis; sulfite from sulfate: step 1/3. Functionally, with CysN forms the ATP sulfurylase (ATPS) that catalyzes the adenylation of sulfate producing adenosine 5'-phosphosulfate (APS) and diphosphate, the first enzymatic step in sulfur assimilation pathway. APS synthesis involves the formation of a high-energy phosphoric-sulfuric acid anhydride bond driven by GTP hydrolysis by CysN coupled to ATP hydrolysis by CysD. This chain is Sulfate adenylyltransferase subunit 2, found in Psychromonas ingrahamii (strain DSM 17664 / CCUG 51855 / 37).